Here is a 369-residue protein sequence, read N- to C-terminus: Glutamate 5-kinase (369 aa).

Residue lysine 11 participates in ATP binding. Residues serine 51, aspartate 138, and asparagine 150 each coordinate substrate. ATP-binding positions include 170–171 (TD) and 212–218 (TGGMATK). A PUA domain is found at 277-355 (KGSIVIDEGA…QDIYAVLGYE (79 aa)).

Belongs to the glutamate 5-kinase family.

It localises to the cytoplasm. The catalysed reaction is L-glutamate + ATP = L-glutamyl 5-phosphate + ADP. The protein operates within amino-acid biosynthesis; L-proline biosynthesis; L-glutamate 5-semialdehyde from L-glutamate: step 1/2. In terms of biological role, catalyzes the transfer of a phosphate group to glutamate to form L-glutamate 5-phosphate. This chain is Glutamate 5-kinase, found in Aliivibrio fischeri (strain ATCC 700601 / ES114) (Vibrio fischeri).